The primary structure comprises 173 residues: Mesencephalic astrocyte-derived neurotrophic factor homolog (173 aa).

A signal peptide spans 1 to 22 (MKTAHLVVVVCFLAGALQTAVA). 4 cysteine pairs are disulfide-bonded: Cys28/Cys114, Cys31/Cys103, Cys61/Cys72, and Cys148/Cys151.

Belongs to the ARMET family.

The protein resides in the secreted. Required during the maturation of the embryonic nervous system for maintenance of neuronal and cuticular connectivity. Essential for maintenance of dopaminergic neurons and dopamine levels. The chain is Mesencephalic astrocyte-derived neurotrophic factor homolog from Drosophila ananassae (Fruit fly).